The sequence spans 319 residues: Tryptophan--tRNA ligase (319 aa).

Residues 8 to 10 and 16 to 17 contribute to the ATP site; these read QPS and GN. Residues 9-17 carry the 'HIGH' region motif; sequence PSGDLHIGN. Asp-131 provides a ligand contact to L-tryptophan. ATP is bound by residues 143–145, Val-182, and 189–193; these read GKD and KMSKS. Positions 189 to 193 match the 'KMSKS' region motif; the sequence is KMSKS.

The protein belongs to the class-I aminoacyl-tRNA synthetase family. Homodimer.

It localises to the cytoplasm. It carries out the reaction tRNA(Trp) + L-tryptophan + ATP = L-tryptophyl-tRNA(Trp) + AMP + diphosphate + H(+). Its function is as follows. Catalyzes the attachment of tryptophan to tRNA(Trp). The sequence is that of Tryptophan--tRNA ligase from Campylobacter jejuni subsp. jejuni serotype O:2 (strain ATCC 700819 / NCTC 11168).